Reading from the N-terminus, the 41-residue chain is MTNFTTYLSTAPVVALIWFTFTAGLLIEINRFFPDPLVFSF.

The helical transmembrane segment at 7–27 (YLSTAPVVALIWFTFTAGLLI) threads the bilayer.

The protein belongs to the PsaJ family.

It localises to the plastid. The protein resides in the chloroplast thylakoid membrane. May help in the organization of the PsaE and PsaF subunits. This Pleurastrum terricola (Filamentous green alga) protein is Photosystem I reaction center subunit IX.